The sequence spans 178 residues: GPI mannosyltransferase 2 subunit C167.09 (178 aa).

Residues 1-20 (MREFRLIFVLLFFLPSFAIA) form the signal peptide. The Lumenal portion of the chain corresponds to 21–152 (NTEIINVETG…LGFLPKSVLP (132 aa)). N-linked (GlcNAc...) asparagine glycans are attached at residues asparagine 48, asparagine 49, asparagine 106, asparagine 115, and asparagine 122. A helical transmembrane segment spans residues 153-173 (IVGFVFVIILIALICMTNLFI). Residues 174 to 178 (KHKRD) lie on the Cytoplasmic side of the membrane.

Part of the GPI mannosyltransferase 2 complex composed of gpi18 and C167.09.

Its subcellular location is the endoplasmic reticulum membrane. It functions in the pathway glycolipid biosynthesis; glycosylphosphatidylinositol-anchor biosynthesis. Functionally, essential component of the GPI mannosyltransferase 2 complex. Responsible for the transfer of the second mannose to the glycosylphosphatidylinositol during GPI precursor assembly. The protein is GPI mannosyltransferase 2 subunit C167.09 of Schizosaccharomyces pombe (strain 972 / ATCC 24843) (Fission yeast).